We begin with the raw amino-acid sequence, 224 residues long: Cerebellin-2 (224 aa).

The first 51 residues, 1-51 (MPAPGQGPRGPLLSMPGRRGALREPADFGSSLGAVLALLLLLLPACCPVRA), serve as a signal peptide directing secretion. Asn-53 and Asn-110 each carry an N-linked (GlcNAc...) asparagine glycan. In terms of domain architecture, C1q spans 88–224 (SGSAKVAFSA…TFSGFLVFPL (137 aa)).

As to quaternary structure, homohexamer; disulfide-linked homotrimers. The trimers are assembled via the globular C1q domains. The trimers associate via N-terminal cysteine residues to form disulfide-linked hexamers. May form homooligomers or heterooligomers with CBLN1 and CBLN3 prior to secretion. Once secreted, does not interact with other CBLN family members. Interacts with GRID2, and more weakly with GRID1. Interacts with NRXN1 and NRXN2 long and short isoforms produced by alternative promoter usage. Weakly interacts with NRXN3 short isoform and not at all with NRXN3 long isoform. In terms of tissue distribution, expressed in various brain regions with higher levels in the olfactory bulb, cerebral cortex, certain thalamic and hypothalamic nuclei, superior and inferior colliculi and some brainstem nuclei. Highly expressed in the dorsal medial habenula.

The protein resides in the secreted. Acts as a synaptic organizer in specific subsets of neurons in the brain. Essential for long-term maintenance but not establishment of excitatory synapses. Functions as part of a trans-synaptic complex by binding to postsynaptic GRID1 and presynaptic neurexins. This interaction helps regulate the activity of NMDA and AMPA receptors at hippocampal synapses without affecting synapse formation. NRXN1B-CBLN2-GRID1 complex transduce presynaptic signals into postsynaptic NMDAR response. NRXN3B-CBLN2-GRID1 complex transduce presynaptic signals into postsynaptic AMPAR response. The chain is Cerebellin-2 (Cbln2) from Mus musculus (Mouse).